A 386-amino-acid polypeptide reads, in one-letter code: Rhomboid domain-containing protein 3 (386 aa).

Helical transmembrane passes span 20 to 40 (VLMLLMSTLWLVGAGPGLVLA), 58 to 78 (LGHTALPGLLLSLLLLPTVGW), 92 to 112 (ASALLALASGLLAVLLAGLGL), 141 to 161 (GALPPWLSPWLLLALTPLLSS), and 163 to 183 (PPFLQLLCGLLAGLAYAAGAF). Positions 324–362 (VSSLRLQQLERMGFPTEQAVVALAATGRVEGAVSLLVGG) constitute a UBA domain.

It is found in the membrane. The protein is Rhomboid domain-containing protein 3 (RHBDD3) of Homo sapiens (Human).